We begin with the raw amino-acid sequence, 160 residues long: Large ribosomal subunit protein eL21 (160 aa).

This sequence belongs to the eukaryotic ribosomal protein eL21 family. As to quaternary structure, component of the large ribosomal subunit. Mature ribosomes consist of a small (40S) and a large (60S) subunit. The 40S subunit contains about 32 different proteins and 1 molecule of RNA (18S). The 60S subunit contains 45 different proteins and 3 molecules of RNA (25S, 5.8S and 5S).

The protein localises to the cytoplasm. Component of the ribosome, a large ribonucleoprotein complex responsible for the synthesis of proteins in the cell. The small ribosomal subunit (SSU) binds messenger RNAs (mRNAs) and translates the encoded message by selecting cognate aminoacyl-transfer RNA (tRNA) molecules. The large subunit (LSU) contains the ribosomal catalytic site termed the peptidyl transferase center (PTC), which catalyzes the formation of peptide bonds, thereby polymerizing the amino acids delivered by tRNAs into a polypeptide chain. The nascent polypeptides leave the ribosome through a tunnel in the LSU and interact with protein factors that function in enzymatic processing, targeting, and the membrane insertion of nascent chains at the exit of the ribosomal tunnel. The sequence is that of Large ribosomal subunit protein eL21 from Candida albicans (strain SC5314 / ATCC MYA-2876) (Yeast).